The following is a 269-amino-acid chain: Bidirectional sugar transporter SWEET1a (269 aa).

Residues 1 to 6 are Extracellular-facing; it reads MEHIAR. Residues 7–27 traverse the membrane as a helical segment; sequence FFFGVSGNVIALFLFLSPVVT. The MtN3/slv 1 domain occupies 8-96; sequence FFGVSGNVIA…IFLIFAVDRR (89 aa). The Cytoplasmic segment spans residues 28-42; sequence FWRIIRKRSTEDFSG. A helical membrane pass occupies residues 43 to 63; the sequence is VPYNMTLLNCLLSAWYGLPFV. Residues 64–72 lie on the Extracellular side of the membrane; that stretch reads SPNNILVST. Residues 73-93 traverse the membrane as a helical segment; sequence INGTGSVIEAIYVVIFLIFAV. At 94 to 100 the chain is on the cytoplasmic side; that stretch reads DRRARLR. Residues 101–121 traverse the membrane as a helical segment; sequence MLGLLSIVVSIFATVVLVSLL. Residues 122-129 are Extracellular-facing; sequence ALHGNARK. The chain crosses the membrane as a helical span at residues 130–150; that stretch reads VFCGLAATIFSICMYASPLSI. Residues 132–215 enclose the MtN3/slv 2 domain; the sequence is CGLAATIFSI…ILYFIYRKNK (84 aa). Residues 151 to 164 lie on the Cytoplasmic side of the membrane; the sequence is MRLVIKTKSVEYMP. Residues 165 to 185 form a helical membrane-spanning segment; that stretch reads FLLSLAVFLCGTSWFIYGLLG. Residues 186–189 lie on the Extracellular side of the membrane; that stretch reads RDPF. A helical transmembrane segment spans residues 190 to 210; that stretch reads IIIPNGCGSFLGLVQLILYFI. The Cytoplasmic portion of the chain corresponds to 211-269; the sequence is YRKNKGPAVPAGKGEAAAAADVEDAKKVAAAVEMADATTTNKAAADTVVGDGKVVASQV.

This sequence belongs to the SWEET sugar transporter family. In terms of assembly, forms homooligomers and/or heterooligomers.

The protein localises to the cell membrane. In terms of biological role, mediates both low-affinity uptake and efflux of sugar across the plasma membrane. This chain is Bidirectional sugar transporter SWEET1a, found in Sorghum bicolor (Sorghum).